The following is a 422-amino-acid chain: Keratin, type I cytoskeletal 23 (422 aa).

Over residues 1-24 (MNSSHSFNQTYSASVHSLGSTRGR) the composition is skewed to polar residues. The segment at 1–35 (MNSSHSFNQTYSASVHSLGSTRGRQGSCHRAPSVH) is disordered. A head region spans residues 1-71 (MNSSHSFNQT…GRSSPLLGGN (71 aa)). The segment at 72–107 (GKATMQNLNDRLATYLEKVRALEEANSKLETRILRW) is coil 1A. The 311-residue stretch at 72–382 (GKATMQNLND…RLLEGDTEGT (311 aa)) folds into the IF rod domain. The linker 1 stretch occupies residues 108-125 (HQEREPSHRKDYSQYEEN). Residues 126-217 (ISRLQEQIVD…KRHEQEMEEN (92 aa)) are coil 1B. Positions 218–240 (HLPSDFKVSVKVDTTPGEDLIKV) are linker 12. A coil 2 region spans residues 241–378 (LEDMRQEYEL…ATYRRLLEGD (138 aa)). Positions 379 to 422 (TEGTMDGSESRLKGSEASTIKAITQESVNGRIVLSQVNEIQKHI) are rod-like helical tail.

This sequence belongs to the intermediate filament family. Heterotetramer of two type I and two type II keratins.

In Mus musculus (Mouse), this protein is Keratin, type I cytoskeletal 23 (Krt23).